The following is a 238-amino-acid chain: uncharacterized protein (238 aa).

6 helical membrane-spanning segments follow: residues 24–44, 78–98, 109–129, 156–176, 188–208, and 216–236; these read IFIA…YMKN, GFLL…LPGL, ILFI…IILV, FILL…IQVI, MYAY…IITP, and IIMS…LKIL.

The protein belongs to the TatC family.

The protein resides in the plastid. The protein localises to the chloroplast membrane. This is an uncharacterized protein from Gracilaria tenuistipitata var. liui (Red alga).